An 842-amino-acid chain; its full sequence is Xyloglucanase Xgh74A (842 aa).

An N-terminal signal peptide occupies residues 1–32; it reads MVKKFTSKIKAAVFAAVVAATAIFGPAISSQA. Asp-70 (nucleophile) is an active-site residue. 4 BNR repeats span residues 134-144, 185-196, 252-262, and 358-368; these read RSTDRGETWEK, WRSTDYGVTWSK, YRSTDGGVTWK, and FRSTDGGATWK. Asp-480 (proton donor) is an active-site residue. 5 BNR repeats span residues 533–541, 577–586, 616–626, 660–671, and 708–718; these read FSYDGGRNW, VTTDNGNSWK, YISTDGGLTFT, WRSTDGGYTFEK, and FRSDDAGKTWV. One can recognise a Dockerin domain in the interval 771–841; the sequence is DKGLVGDLNG…LLQAIPELPK (71 aa).

Belongs to the glycosyl hydrolase 74 family.

Hydrolyzes the glucosidic bonds of unbranched Glc residues in tamarind seed xyloglucan, producing XXXG, XLXG, XXLG and XLLG. Has low activity on carboxymethylcellulose, lichenan,hydroxyethylcellulose and glucuronoxylan, and no activity on xylan, polygalaturonic acid, wheat arabinoxylan, rhamnogalacturan, curdlan, laminarin, galactomannan, galactan, arabinan and pachyman or amorphous cellulose. The chain is Xyloglucanase Xgh74A from Acetivibrio thermocellus (strain ATCC 27405 / DSM 1237 / JCM 9322 / NBRC 103400 / NCIMB 10682 / NRRL B-4536 / VPI 7372) (Clostridium thermocellum).